A 271-amino-acid chain; its full sequence is Regulatory protein RecX (271 aa).

It belongs to the RecX family.

It is found in the cytoplasm. Functionally, modulates RecA activity. In Lactobacillus delbrueckii subsp. bulgaricus (strain ATCC BAA-365 / Lb-18), this protein is Regulatory protein RecX.